A 173-amino-acid chain; its full sequence is Nicotinamide-nucleotide adenylyltransferase (173 aa).

It belongs to the archaeal NMN adenylyltransferase family.

The protein localises to the cytoplasm. It carries out the reaction beta-nicotinamide D-ribonucleotide + ATP + H(+) = diphosphate + NAD(+). Its pathway is cofactor biosynthesis; NAD(+) biosynthesis; NAD(+) from nicotinamide D-ribonucleotide: step 1/1. The chain is Nicotinamide-nucleotide adenylyltransferase (ffdC) from Methanolobus tindarius.